The sequence spans 304 residues: Aspartate carbamoyltransferase catalytic subunit (304 aa).

Arg49 and Thr50 together coordinate carbamoyl phosphate. Lys77 provides a ligand contact to L-aspartate. Carbamoyl phosphate is bound by residues Arg99, His127, and Gln130. L-aspartate contacts are provided by Arg160 and Arg211. The carbamoyl phosphate site is built by Ala252 and Pro253.

This sequence belongs to the aspartate/ornithine carbamoyltransferase superfamily. ATCase family. In terms of assembly, heterododecamer (2C3:3R2) of six catalytic PyrB chains organized as two trimers (C3), and six regulatory PyrI chains organized as three dimers (R2).

It catalyses the reaction carbamoyl phosphate + L-aspartate = N-carbamoyl-L-aspartate + phosphate + H(+). It functions in the pathway pyrimidine metabolism; UMP biosynthesis via de novo pathway; (S)-dihydroorotate from bicarbonate: step 2/3. Catalyzes the condensation of carbamoyl phosphate and aspartate to form carbamoyl aspartate and inorganic phosphate, the committed step in the de novo pyrimidine nucleotide biosynthesis pathway. The polypeptide is Aspartate carbamoyltransferase catalytic subunit (Bacillus cytotoxicus (strain DSM 22905 / CIP 110041 / 391-98 / NVH 391-98)).